A 583-amino-acid chain; its full sequence is Pescadillo (583 aa).

Residues 275-329 (EKLSALSASLARMVASVEEEEAELDHFPTEGEDQEKMEVREKMEQQQSKQKKLFE) adopt a coiled-coil conformation. Residues 323–416 (KQKKLFEGLK…IQLPVEEYFL (94 aa)) form the BRCT domain. Disordered regions lie at residues 448 to 526 (RGEK…EEKA) and 558 to 583 (ANKL…KKKC). Acidic residues predominate over residues 455-489 (EEDEEEEGEEEEDDEEDEEDDEQSEDEEEAEEEAN). Basic and acidic residues predominate over residues 512–526 (AKAENRARAAEEEKA).

This sequence belongs to the pescadillo family. As to quaternary structure, component of the PeBoW complex, composed of bop1, pes1 and wdr12. The complex is held together by bop1, which interacts with pes1 via its N-terminal domain and with wdr12 via a high-affinity interaction between the seven-bladed beta-propeller domains of the 2 proteins. The PeBoW complex associates with the 66S pre-ribosome.

It is found in the nucleus. The protein localises to the nucleolus. Its subcellular location is the nucleoplasm. Functionally, component of the PeBoW complex, which is required for maturation of 28S and 5.8S ribosomal RNAs and formation of the 60S ribosome. This Danio rerio (Zebrafish) protein is Pescadillo (pes).